The sequence spans 101 residues: Small ribosomal subunit protein bS18c (101 aa).

Belongs to the bacterial ribosomal protein bS18 family. In terms of assembly, part of the 30S ribosomal subunit.

It is found in the plastid. The protein localises to the chloroplast. This is Small ribosomal subunit protein bS18c from Morus indica (Mulberry).